A 75-amino-acid chain; its full sequence is DNA-directed RNA polymerase subunit omega (75 aa).

It belongs to the RNA polymerase subunit omega family. In terms of assembly, in cyanobacteria the RNAP catalytic core is composed of 2 alpha, 1 beta, 1 beta', 1 gamma and 1 omega subunit. When a sigma factor is associated with the core the holoenzyme is formed, which can initiate transcription.

The enzyme catalyses RNA(n) + a ribonucleoside 5'-triphosphate = RNA(n+1) + diphosphate. In terms of biological role, promotes RNA polymerase assembly. Latches the N- and C-terminal regions of the beta' subunit thereby facilitating its interaction with the beta and alpha subunits. The protein is DNA-directed RNA polymerase subunit omega of Parasynechococcus marenigrum (strain WH8102).